A 204-amino-acid chain; its full sequence is High frequency lysogenization protein HflD homolog (204 aa).

It belongs to the HflD family.

The protein localises to the cytoplasm. It is found in the cell inner membrane. The chain is High frequency lysogenization protein HflD homolog from Shewanella sediminis (strain HAW-EB3).